A 493-amino-acid chain; its full sequence is Glutamyl-tRNA(Gln) amidotransferase subunit A (493 aa).

Residues lysine 79 and serine 159 each act as charge relay system in the active site. Residue serine 183 is the Acyl-ester intermediate of the active site.

This sequence belongs to the amidase family. GatA subfamily. Heterotrimer of A, B and C subunits.

It carries out the reaction L-glutamyl-tRNA(Gln) + L-glutamine + ATP + H2O = L-glutaminyl-tRNA(Gln) + L-glutamate + ADP + phosphate + H(+). Its function is as follows. Allows the formation of correctly charged Gln-tRNA(Gln) through the transamidation of misacylated Glu-tRNA(Gln) in organisms which lack glutaminyl-tRNA synthetase. The reaction takes place in the presence of glutamine and ATP through an activated gamma-phospho-Glu-tRNA(Gln). In Sinorhizobium medicae (strain WSM419) (Ensifer medicae), this protein is Glutamyl-tRNA(Gln) amidotransferase subunit A.